The chain runs to 205 residues: Putative 3-methyladenine DNA glycosylase (205 aa).

The protein belongs to the DNA glycosylase MPG family.

This chain is Putative 3-methyladenine DNA glycosylase, found in Bacillus cereus (strain Q1).